A 425-amino-acid polypeptide reads, in one-letter code: Formyl-CoA:oxalate CoA-transferase (425 aa).

CoA-binding positions include 17 to 18, arginine 38, 72 to 75, 96 to 98, arginine 104, and 136 to 139; these read QS, LDTK, NFG, and KVYE. Aspartate 168 (nucleophile) is an active-site residue. 247–249 provides a ligand contact to substrate; that stretch reads GGQ.

It belongs to the CoA-transferase III family. Frc subfamily. In terms of assembly, homodimer.

The catalysed reaction is formyl-CoA + oxalate = oxalyl-CoA + formate. It functions in the pathway metabolic intermediate degradation; oxalate degradation; CO(2) and formate from oxalate: step 1/2. Functionally, involved in the catabolism of oxalate and in the adapatation to low pH via the induction of the oxalate-dependent acid tolerance response (ATR). Catalyzes the transfer of the CoA moiety from formyl-CoA to oxalate. In Rhodopseudomonas palustris (strain BisA53), this protein is Formyl-CoA:oxalate CoA-transferase.